The chain runs to 223 residues: UPF0441 protein YgiB (223 aa).

The segment covering Thr-178–Thr-195 has biased composition (low complexity). Positions Thr-178–Gly-223 are disordered. Residues Ala-204 to Gly-223 are compositionally biased toward polar residues.

Belongs to the UPF0441 family.

In Shigella flexneri serotype 5b (strain 8401), this protein is UPF0441 protein YgiB.